Here is a 204-residue protein sequence, read N- to C-terminus: Pyridoxal 5'-phosphate synthase subunit PdxT (204 aa).

Residue 52–54 participates in L-glutamine binding; that stretch reads GES. Residue Cys84 is the Nucleophile of the active site. L-glutamine-binding positions include Arg116 and 143–144; that span reads IR. Catalysis depends on charge relay system residues His184 and Glu186.

Belongs to the glutaminase PdxT/SNO family. As to quaternary structure, in the presence of PdxS, forms a dodecamer of heterodimers. Only shows activity in the heterodimer.

It carries out the reaction aldehydo-D-ribose 5-phosphate + D-glyceraldehyde 3-phosphate + L-glutamine = pyridoxal 5'-phosphate + L-glutamate + phosphate + 3 H2O + H(+). The catalysed reaction is L-glutamine + H2O = L-glutamate + NH4(+). It functions in the pathway cofactor biosynthesis; pyridoxal 5'-phosphate biosynthesis. Its function is as follows. Catalyzes the hydrolysis of glutamine to glutamate and ammonia as part of the biosynthesis of pyridoxal 5'-phosphate. The resulting ammonia molecule is channeled to the active site of PdxS. The chain is Pyridoxal 5'-phosphate synthase subunit PdxT from Pyrobaculum arsenaticum (strain DSM 13514 / JCM 11321 / PZ6).